Reading from the N-terminus, the 348-residue chain is Protein RecA (348 aa).

ATP is bound at residue 64 to 71 (GPESSGKT). The span at 325–335 (YEIDGASKEPL) shows a compositional bias: basic and acidic residues. The segment at 325–348 (YEIDGASKEPLEETEETLSLLDDE) is disordered. The segment covering 336-348 (EETEETLSLLDDE) has biased composition (acidic residues).

It belongs to the RecA family.

Its subcellular location is the cytoplasm. Can catalyze the hydrolysis of ATP in the presence of single-stranded DNA, the ATP-dependent uptake of single-stranded DNA by duplex DNA, and the ATP-dependent hybridization of homologous single-stranded DNAs. It interacts with LexA causing its activation and leading to its autocatalytic cleavage. This chain is Protein RecA, found in Listeria seeligeri.